A 586-amino-acid chain; its full sequence is Transcription elongation regulator 1-like protein (586 aa).

A disordered region spans residues Met-1–Asp-30. Over residues Phe-7–Gln-23 the composition is skewed to basic residues. In terms of domain architecture, WW 1 spans Thr-148–Glu-181. Disordered regions lie at residues Thr-281–Pro-344 and Asp-378–Leu-448. The segment covering Lys-306 to Pro-317 has biased composition (basic and acidic residues). Residues Pro-339–Asp-372 form the WW 2 domain. Composition is skewed to basic and acidic residues over residues Asp-378 to Pro-387, Asp-411 to Thr-421, and Lys-428 to Thr-439. FF domains follow at residues Leu-450–Thr-503 and Lys-515–Ile-570.

The protein is Transcription elongation regulator 1-like protein (TCERG1L) of Homo sapiens (Human).